The sequence spans 366 residues: Peptide chain release factor 2 (366 aa).

The residue at position 246 (Gln-246) is an N5-methylglutamine.

This sequence belongs to the prokaryotic/mitochondrial release factor family. In terms of processing, methylated by PrmC. Methylation increases the termination efficiency of RF2.

It localises to the cytoplasm. Functionally, peptide chain release factor 2 directs the termination of translation in response to the peptide chain termination codons UGA and UAA. In Frankia casuarinae (strain DSM 45818 / CECT 9043 / HFP020203 / CcI3), this protein is Peptide chain release factor 2.